We begin with the raw amino-acid sequence, 575 residues long: Lysine--tRNA ligase (575 aa).

Positions 412 and 419 each coordinate Mg(2+).

Belongs to the class-II aminoacyl-tRNA synthetase family. As to quaternary structure, homodimer. It depends on Mg(2+) as a cofactor.

It is found in the cytoplasm. The catalysed reaction is tRNA(Lys) + L-lysine + ATP = L-lysyl-tRNA(Lys) + AMP + diphosphate. The chain is Lysine--tRNA ligase from Bacteroides fragilis (strain YCH46).